Consider the following 1004-residue polypeptide: Kinesin-like protein KIN-7I (1004 aa).

Residues 6 to 326 (KILVSVRVRP…LLFATCAKEV (321 aa)) form the Kinesin motor domain. Residue 89–96 (GQTSSGKT) coordinates ATP. Coiled coils occupy residues 335-402 (VVSE…AQSR), 517-576 (KKEY…QKQS), and 634-661 (SVEK…DQSE). Disordered stretches follow at residues 567 to 599 (EQSV…KSLP), 628 to 671 (SQQT…PEDE), and 802 to 830 (TMQH…GEKT). Composition is skewed to basic and acidic residues over residues 569-582 (SVEK…KEEM) and 634-652 (SVEK…EDLK). The segment covering 653-663 (QNLSMDQSEQL) has biased composition (polar residues). Lysine 881 participates in a covalent cross-link: Glycyl lysine isopeptide (Lys-Gly) (interchain with G-Cter in ubiquitin).

Belongs to the TRAFAC class myosin-kinesin ATPase superfamily. Kinesin family. KIN-7 subfamily.

This chain is Kinesin-like protein KIN-7I, found in Arabidopsis thaliana (Mouse-ear cress).